The primary structure comprises 465 residues: SET domain-containing protein 3 (465 aa).

One can recognise an SET domain in the interval 18–265; sequence DKVTVKWDKK…AREELLDSYG (248 aa).

It belongs to the class V-like SAM-binding methyltransferase superfamily.

This is SET domain-containing protein 3 (set-3) from Caenorhabditis elegans.